Here is a 327-residue protein sequence, read N- to C-terminus: Aldo-keto reductase FVEG_12638 (327 aa).

Residue D51 participates in NADP(+) binding. Y56 serves as the catalytic Proton donor. H122 contacts substrate. NADP(+) is bound by residues 152–153 (SE), 202–212 (GPLGHGWLVED), and 286–294 (ENFTSRDIE).

It belongs to the aldo/keto reductase family. Aldo/keto reductase 2 subfamily.

Functionally, aldo-keto reductase; part of the Fusarium detoxification of benzoxazolinone cluster 2 (FDB2) involved in the degradation of benzoxazolinones produced by the host plant. Maize, wheat, and rye produce the 2 benzoxazinone phytoanticipins 2,4-dihy-droxy-7-methoxy-1,4-benzoxazin-3-one (DIMBOA) and 2,4-dihydroxy-1,4-benzoxazin-3-one (DIBOA) that, due to their inherent instability once released, spontaneously degrade to the more stable corresponding benzoxazolinones, 6-methoxy-2-benzoxazolinone (MBOA) and 2-benzoxazolinone (BOA), respectively. The first step in the detoxification of benzoxazolinones involves the hydrolysis of the cyclic ester bond of benzoxazolinones by the FDB1 cluster gamma-lactamase MBL1 to aminophenols. MBL1 is able to convert BOA into 2-aminophenol (2-AP), as well as MBOA into 5-methoxy-2-aminophenol (2-AMP). The FDB2 cluster N-malonyltransferase FDB2/NAT1 then metabolizes aminophenols via N-malonylation to non-toxic malonamic acids. FDB2/NAT1 converts 2-AP into N-(2-hydroxyphenyl) malonamic acid (HPMA) and 2-AMP into N-(2-hydroxy-4-methoxyphenyl) malonamic acid (HMPMA). The duplicated dienlactone hydrolases DLH1 and DLH2 may provide redundant function for hydrolyzing the lactone moiety in the BOA molecule. The roles of the amidases an other enzymes encoded by the 2 FDB clusters have not been identified so far. This is Aldo-keto reductase FVEG_12638 from Gibberella moniliformis (strain M3125 / FGSC 7600) (Maize ear and stalk rot fungus).